Consider the following 165-residue polypeptide: SsrA-binding protein (165 aa).

Residues 135 to 158 (QAHDKRQDMARRDAQREVTRELGR) are compositionally biased toward basic and acidic residues. The segment at 135–165 (QAHDKRQDMARRDAQREVTRELGRRVKGMTS) is disordered.

The protein belongs to the SmpB family.

The protein resides in the cytoplasm. In terms of biological role, required for rescue of stalled ribosomes mediated by trans-translation. Binds to transfer-messenger RNA (tmRNA), required for stable association of tmRNA with ribosomes. tmRNA and SmpB together mimic tRNA shape, replacing the anticodon stem-loop with SmpB. tmRNA is encoded by the ssrA gene; the 2 termini fold to resemble tRNA(Ala) and it encodes a 'tag peptide', a short internal open reading frame. During trans-translation Ala-aminoacylated tmRNA acts like a tRNA, entering the A-site of stalled ribosomes, displacing the stalled mRNA. The ribosome then switches to translate the ORF on the tmRNA; the nascent peptide is terminated with the 'tag peptide' encoded by the tmRNA and targeted for degradation. The ribosome is freed to recommence translation, which seems to be the essential function of trans-translation. This Mycolicibacterium vanbaalenii (strain DSM 7251 / JCM 13017 / BCRC 16820 / KCTC 9966 / NRRL B-24157 / PYR-1) (Mycobacterium vanbaalenii) protein is SsrA-binding protein.